Here is a 246-residue protein sequence, read N- to C-terminus: C-X-C motif chemokine 16 (246 aa).

A signal peptide spans 1-26; the sequence is MRRGFGPLSLAFFLFLLALLTLPGDG. At 27 to 201 the chain is on the extracellular side; sequence NQGSVAGSCS…PGAGASTPAW (175 aa). 2 cysteine pairs are disulfide-bonded: Cys-35–Cys-65 and Cys-37–Cys-79. Disordered regions lie at residues 104–150 and 175–198; these read GKSF…SGAL and PEAE…GAST. Residues 128 to 146 are compositionally biased toward polar residues; the sequence is PSDTSTPAHSQSTQHSTLP. Residues 175 to 189 are compositionally biased toward basic and acidic residues; that stretch reads PEAEANEKQQDDRQQ. A helical transmembrane segment spans residues 202-222; that stretch reads VPVLSLLAIVFFLTAAMAYVL. The Cytoplasmic portion of the chain corresponds to 223–246; sequence CNRRATQQNSAGLQLWYTPVEPRP.

This sequence belongs to the intercrine alpha (chemokine CxC) family. Glycosylated. As to expression, widely expressed. Not detected in purified B- and T-cells.

Its subcellular location is the membrane. Its function is as follows. Induces a strong chemotactic response. Induces calcium mobilization. Binds to CXCR6/Bonzo. Also acts as a scavenger receptor on macrophages, which specifically binds to OxLDL (oxidized low density lipoprotein), suggesting that it may be involved in pathophysiology such as atherogenesis. The protein is C-X-C motif chemokine 16 (Cxcl16) of Mus musculus (Mouse).